Consider the following 442-residue polypeptide: GTPase Der (442 aa).

EngA-type G domains lie at Arg-2–Asn-167 and Phe-175–Met-351. GTP is bound by residues Gly-8–Ser-15, Asp-55–Ile-59, Asn-119–Glu-122, Gly-181–Ser-188, Asp-228–Val-232, and Asn-293–Asp-296. One can recognise a KH-like domain in the interval Arg-352–Asn-436.

This sequence belongs to the TRAFAC class TrmE-Era-EngA-EngB-Septin-like GTPase superfamily. EngA (Der) GTPase family. In terms of assembly, associates with the 50S ribosomal subunit.

Its function is as follows. GTPase that plays an essential role in the late steps of ribosome biogenesis. The chain is GTPase Der from Ureaplasma urealyticum serovar 10 (strain ATCC 33699 / Western).